The primary structure comprises 241 residues: MDKDELKEIIKNLPDNSPKILEYLKLAKEKGWKDIVNMIAQKLGLEEEEKKKTDETDVLKKILKPLGKGKIKGTWDYSVDFVEAKKTLVSAYKQLYDTNLMPYEAYVAILLIQLVNGCRIREAIRAFKTFIESGEREFQLQAQKHGNIRFMIIPDVVKKKATYNAVLTIDDEKLSARIRMFALHYLKANTHSLRYALISYLAKNGIDPAIIAKITGHKRLDRIITYTQTKDAIEMLRKLAD.

One can recognise a Tyr recombinase domain in the interval 82–241 (VEAKKTLVSA…AIEMLRKLAD (160 aa)). Catalysis depends on residues Arg119, Lys144, His191, Arg194, and His217. Tyr226 acts as the O-(3'-phospho-DNA)-tyrosine intermediate in catalysis.

Belongs to the 'phage' integrase family.

This protein may encode an integrase, which is necessary for integration of the viral DNA into host genome. In Acidianus convivator (ATV), this protein is Putative integrase ORF241.